A 72-amino-acid chain; its full sequence is Translation initiation factor IF-1 (72 aa).

Residues 1–72 (MAKEDCIEME…TKGRIKFRSK (72 aa)) form the S1-like domain.

This sequence belongs to the IF-1 family. As to quaternary structure, component of the 30S ribosomal translation pre-initiation complex which assembles on the 30S ribosome in the order IF-2 and IF-3, IF-1 and N-formylmethionyl-tRNA(fMet); mRNA recruitment can occur at any time during PIC assembly.

The protein resides in the cytoplasm. One of the essential components for the initiation of protein synthesis. Stabilizes the binding of IF-2 and IF-3 on the 30S subunit to which N-formylmethionyl-tRNA(fMet) subsequently binds. Helps modulate mRNA selection, yielding the 30S pre-initiation complex (PIC). Upon addition of the 50S ribosomal subunit IF-1, IF-2 and IF-3 are released leaving the mature 70S translation initiation complex. The polypeptide is Translation initiation factor IF-1 (Francisella tularensis subsp. tularensis (strain FSC 198)).